The following is a 117-amino-acid chain: Acidic phospholipase A2 PA-1G (117 aa).

Intrachain disulfides connect C11–C71, C27–C117, C29–C45, C44–C98, C51–C91, C60–C84, and C78–C89. Residues Y28, G30, and G32 each coordinate Ca(2+). H48 is a catalytic residue. Ca(2+) is bound at residue D49. D92 is an active-site residue.

This sequence belongs to the phospholipase A2 family. Group I subfamily. D49 sub-subfamily. The cofactor is Ca(2+). In terms of tissue distribution, expressed by the venom gland.

It is found in the secreted. The enzyme catalyses a 1,2-diacyl-sn-glycero-3-phosphocholine + H2O = a 1-acyl-sn-glycero-3-phosphocholine + a fatty acid + H(+). Its function is as follows. PLA2 catalyzes the calcium-dependent hydrolysis of the 2-acyl groups in 3-sn-phosphoglycerides. This chain is Acidic phospholipase A2 PA-1G, found in Pseudechis australis (Mulga snake).